Here is a 358-residue protein sequence, read N- to C-terminus: Mesaconyl-CoA hydratase (358 aa).

One can recognise a MaoC-like domain in the interval 44–148 (AHDPGLRLTH…TSSSRPQYGI (105 aa)).

It belongs to the enoyl-CoA hydratase/isomerase family.

The catalysed reaction is (2R,3S)-beta-methylmalyl-CoA = 2-methylfumaryl-CoA + H2O. Functionally, involved in the methylaspartate cycle. Catalyzes the reversible hydration of mesaconyl-CoA (2-methylfumaryl-CoA) to yield beta-methylmalyl-CoA ((2R,3S)-beta-methylmalyl-CoA). The polypeptide is Mesaconyl-CoA hydratase (Haloarcula marismortui (strain ATCC 43049 / DSM 3752 / JCM 8966 / VKM B-1809) (Halobacterium marismortui)).